A 116-amino-acid chain; its full sequence is Protein lin-52 homolog (116 aa).

Residues S28 and S53 each carry the phosphoserine modification.

The protein belongs to the lin-52 family. Component of the DREAM complex (also named LINC complex) at least composed of E2F4, E2F5, LIN9, LIN37, LIN52, LIN54, MYBL1, MYBL2, RBL1, RBL2, RBBP4, TFDP1 and TFDP2. The complex exists in quiescent cells where it represses cell cycle-dependent genes. It dissociates in S phase when LIN9, LIN37, LIN52 and LIN54 form a subcomplex that binds to MYBL2.

This chain is Protein lin-52 homolog (LIN52), found in Homo sapiens (Human).